The sequence spans 186 residues: Elongation factor P (186 aa).

It belongs to the elongation factor P family.

Its subcellular location is the cytoplasm. Its pathway is protein biosynthesis; polypeptide chain elongation. Involved in peptide bond synthesis. Stimulates efficient translation and peptide-bond synthesis on native or reconstituted 70S ribosomes in vitro. Probably functions indirectly by altering the affinity of the ribosome for aminoacyl-tRNA, thus increasing their reactivity as acceptors for peptidyl transferase. The polypeptide is Elongation factor P (Enterococcus faecalis (strain ATCC 700802 / V583)).